The chain runs to 337 residues: Holliday junction branch migration complex subunit RuvB (337 aa).

The disordered stretch occupies residues 1 to 27 (MIEADRLVHAQPQGTEERDEQIDRAMR). Residues 4–187 (ADRLVHAQPQ…FGIPLRLEFY (184 aa)) form a large ATPase domain (RuvB-L) region. ATP-binding positions include Arg27, Gly68, Lys71, Thr72, Thr73, 134–136 (EDY), Arg177, Tyr187, and Arg224. Thr72 contributes to the Mg(2+) binding site. Positions 188 to 258 (NVKDLSSIVT…VAESALDMLD (71 aa)) are small ATPAse domain (RuvB-S). A head domain (RuvB-H) region spans residues 261 to 337 (VEGFDYMDRK…YQHFNLIQPE (77 aa)). Residues Arg297, Arg316, and Arg321 each coordinate DNA.

It belongs to the RuvB family. In terms of assembly, homohexamer. Forms an RuvA(8)-RuvB(12)-Holliday junction (HJ) complex. HJ DNA is sandwiched between 2 RuvA tetramers; dsDNA enters through RuvA and exits via RuvB. An RuvB hexamer assembles on each DNA strand where it exits the tetramer. Each RuvB hexamer is contacted by two RuvA subunits (via domain III) on 2 adjacent RuvB subunits; this complex drives branch migration. In the full resolvosome a probable DNA-RuvA(4)-RuvB(12)-RuvC(2) complex forms which resolves the HJ.

The protein localises to the cytoplasm. It carries out the reaction ATP + H2O = ADP + phosphate + H(+). Functionally, the RuvA-RuvB-RuvC complex processes Holliday junction (HJ) DNA during genetic recombination and DNA repair, while the RuvA-RuvB complex plays an important role in the rescue of blocked DNA replication forks via replication fork reversal (RFR). RuvA specifically binds to HJ cruciform DNA, conferring on it an open structure. The RuvB hexamer acts as an ATP-dependent pump, pulling dsDNA into and through the RuvAB complex. RuvB forms 2 homohexamers on either side of HJ DNA bound by 1 or 2 RuvA tetramers; 4 subunits per hexamer contact DNA at a time. Coordinated motions by a converter formed by DNA-disengaged RuvB subunits stimulates ATP hydrolysis and nucleotide exchange. Immobilization of the converter enables RuvB to convert the ATP-contained energy into a lever motion, pulling 2 nucleotides of DNA out of the RuvA tetramer per ATP hydrolyzed, thus driving DNA branch migration. The RuvB motors rotate together with the DNA substrate, which together with the progressing nucleotide cycle form the mechanistic basis for DNA recombination by continuous HJ branch migration. Branch migration allows RuvC to scan DNA until it finds its consensus sequence, where it cleaves and resolves cruciform DNA. This chain is Holliday junction branch migration complex subunit RuvB, found in Shewanella loihica (strain ATCC BAA-1088 / PV-4).